The chain runs to 196 residues: MSRYRGPRLKKIRRLGALPGLTRKTPKSGSNQKKKFHSGKKEQYRIRLQEKQKLRFHYGLTERQLLRYVHIAGKAKRSTGQVLLQLLEMRLDNILFRLGMASTIPGARQLVNHRHILVNGRIVDIPSFRCKPRDIITTKDNQRSKRLVQNYIASSDPGKLPKHLTVDTLQYKGLVKKILDRKWVGLKINELLVVEY.

The interval 15-43 is disordered; it reads LGALPGLTRKTPKSGSNQKKKFHSGKKEQ. The 62-residue stretch at 89–150 folds into the S4 RNA-binding domain; sequence MRLDNILFRL…NQRSKRLVQN (62 aa).

This sequence belongs to the universal ribosomal protein uS4 family. In terms of assembly, part of the 30S ribosomal subunit. Contacts protein S5. The interaction surface between S4 and S5 is involved in control of translational fidelity.

The protein localises to the plastid. The protein resides in the chloroplast. Functionally, one of the primary rRNA binding proteins, it binds directly to 16S rRNA where it nucleates assembly of the body of the 30S subunit. With S5 and S12 plays an important role in translational accuracy. The sequence is that of Small ribosomal subunit protein uS4c (rps4) from Bothriochloa ischaemum (Yellow bluestem).